A 202-amino-acid chain; its full sequence is CASP-like protein 1U4 (202 aa).

The Cytoplasmic segment spans residues 1–10 (MCLPAKWLHP). Residues 11-31 (VSLIFRVAGIGLAAVSAAAML) form a helical membrane-spanning segment. At 32–56 (TASQCTVYADYGWRPRTVTYSDFPA) the chain is on the extracellular side. Residues 57-77 (FVYLVAATAIATLLEAVALFL) form a helical membrane-spanning segment. Over 78 to 94 (SWSKKGKSKKSWRVLTM) the chain is Cytoplasmic. A helical transmembrane segment spans residues 95–115 (LLLGAVVPALLYTSAGAAFAV). Residues 116 to 146 (GWEDIYYYLEPIGRRFSVCRSSVAGGRFCEH) are Extracellular-facing. Residues 147 to 167 (VHVSMWLALGAAVAVSFAEFL) traverse the membrane as a helical segment. At 168–202 (TTFRWCHGSGSCSDSDSDSDSDSESGCGHGCHCKH) the chain is on the cytoplasmic side.

This sequence belongs to the Casparian strip membrane proteins (CASP) family. As to quaternary structure, homodimer and heterodimers.

It is found in the cell membrane. The sequence is that of CASP-like protein 1U4 from Sorghum bicolor (Sorghum).